We begin with the raw amino-acid sequence, 465 residues long: Serine/threonine-protein kinase 38 (465 aa).

At A2 the chain carries N-acetylalanine. Residues 62-87 are interaction with S100B; sequence KRLRRSAHARKETEFLRLKRTRLGLE. T74 bears the Phosphothreonine mark. Positions 89 to 382 constitute a Protein kinase domain; sequence FESLKVIGRG…VEEIKNNSFF (294 aa). ATP is bound by residues 95–103 and K118; that span reads IGRGAFGEV. The active-site Proton acceptor is the D212. Phosphoserine is present on S264. S281 is subject to Phosphoserine; by autocatalysis. The UFM1-interacting motif (UFIM) signature appears at 306–311; that stretch reads WSLGVI. Positions 383 to 455 constitute an AGC-kinase C-terminal domain; it reads EGVDWEHIRE…KRFEGLTARG (73 aa). T444 carries the phosphothreonine; by STK24/MST3 modification.

It belongs to the protein kinase superfamily. AGC Ser/Thr protein kinase family. As to quaternary structure, homodimeric S100B binds two molecules of STK38. Interacts with MOB1 and MOB2. Interacts with MAP3K1 and MAP3K2 (via the kinase domain). Forms a tripartite complex with MOBKL1B and STK3/MST2. Interacts with MICAL1; leading to inhibit the protein kinase activity by antagonizing activation by MST1/STK4. Mg(2+) serves as cofactor. Post-translationally, ISGylated. In terms of processing, phosphorylated by STK3/MST2 and this is enhanced by MOBKL1B.

It localises to the nucleus. The protein resides in the cytoplasm. Its subcellular location is the chromosome. It carries out the reaction L-seryl-[protein] + ATP = O-phospho-L-seryl-[protein] + ADP + H(+). It catalyses the reaction L-threonyl-[protein] + ATP = O-phospho-L-threonyl-[protein] + ADP + H(+). With respect to regulation, activated by binding of S100B which releases autoinhibitory N-lobe interactions, enabling ATP to bind and the autophosphorylation of Ser-281. Thr-444 then undergoes calcium-dependent phosphorylation by STK24/MST3. Interactions between phosphorylated Thr-444 and the N-lobe promote additional structural changes that complete the activation of the kinase. Autoinhibition is also released by the binding of MOB1/MOBKL1A and MOB2/HCCA2 to the N-terminal of STK38. Serine/threonine-protein kinase that acts as a negative regulator of MAP3K1/2 signaling. Converts MAP3K2 from its phosphorylated form to its non-phosphorylated form and inhibits autophosphorylation of MAP3K2. Acts as an ufmylation 'reader' in a kinase-independent manner: specifically recognizes and binds mono-ufmylated histone H4 in response to DNA damage, promoting the recruitment of SUV39H1 to the double-strand breaks, resulting in ATM activation. The protein is Serine/threonine-protein kinase 38 (STK38) of Bos taurus (Bovine).